A 312-amino-acid chain; its full sequence is Glycerol-3-phosphate dehydrogenase [NAD(P)+] (312 aa).

Residues tryptophan 11, arginine 30, arginine 31, and lysine 95 each coordinate NADPH. Positions 95, 123, and 125 each coordinate sn-glycerol 3-phosphate. Alanine 127 contacts NADPH. Sn-glycerol 3-phosphate-binding residues include lysine 177, aspartate 230, serine 240, arginine 241, and asparagine 242. The active-site Proton acceptor is the lysine 177. Arginine 241 lines the NADPH pocket. NADPH is bound by residues valine 265 and glutamate 267.

Belongs to the NAD-dependent glycerol-3-phosphate dehydrogenase family.

Its subcellular location is the cytoplasm. It catalyses the reaction sn-glycerol 3-phosphate + NAD(+) = dihydroxyacetone phosphate + NADH + H(+). The enzyme catalyses sn-glycerol 3-phosphate + NADP(+) = dihydroxyacetone phosphate + NADPH + H(+). The protein operates within membrane lipid metabolism; glycerophospholipid metabolism. In terms of biological role, catalyzes the reduction of the glycolytic intermediate dihydroxyacetone phosphate (DHAP) to sn-glycerol 3-phosphate (G3P), the key precursor for phospholipid synthesis. In Helicobacter acinonychis (strain Sheeba), this protein is Glycerol-3-phosphate dehydrogenase [NAD(P)+].